The sequence spans 336 residues: Dihydroorotate dehydrogenase (quinone) (336 aa).

FMN is bound by residues 62 to 66 and Thr-86; that span reads AGLDK. Residue Lys-66 coordinates substrate. 111-115 is a binding site for substrate; the sequence is NRMGF. FMN-binding residues include Asn-139 and Asn-172. Substrate is bound at residue Asn-172. The active-site Nucleophile is the Ser-175. Asn-177 contributes to the substrate binding site. Positions 217 and 245 each coordinate FMN. 246-247 lines the substrate pocket; it reads NT. FMN-binding positions include Gly-268, Gly-297, and 318–319; that span reads YS.

It belongs to the dihydroorotate dehydrogenase family. Type 2 subfamily. Monomer. Requires FMN as cofactor.

It localises to the cell membrane. It catalyses the reaction (S)-dihydroorotate + a quinone = orotate + a quinol. The protein operates within pyrimidine metabolism; UMP biosynthesis via de novo pathway; orotate from (S)-dihydroorotate (quinone route): step 1/1. In terms of biological role, catalyzes the conversion of dihydroorotate to orotate with quinone as electron acceptor. The protein is Dihydroorotate dehydrogenase (quinone) of Pectobacterium carotovorum subsp. carotovorum (strain PC1).